The following is a 38-amino-acid chain: Large ribosomal subunit protein bL36 (38 aa).

This sequence belongs to the bacterial ribosomal protein bL36 family.

The protein is Large ribosomal subunit protein bL36 of Porphyromonas gingivalis (strain ATCC 33277 / DSM 20709 / CIP 103683 / JCM 12257 / NCTC 11834 / 2561).